The chain runs to 41 residues: Peroxidase 3 (41 aa).

It belongs to the peroxidase family. Classical plant (class III) peroxidase subfamily. Heme b serves as cofactor. Requires Ca(2+) as cofactor.

It is found in the secreted. It carries out the reaction 2 a phenolic donor + H2O2 = 2 a phenolic radical donor + 2 H2O. Functionally, removal of H(2)O(2), oxidation of toxic reductants, biosynthesis and degradation of lignin, suberization, auxin catabolism, response to environmental stresses such as wounding, pathogen attack and oxidative stress. These functions might be dependent on each isozyme/isoform in each plant tissue. The chain is Peroxidase 3 from Vitis vinifera (Grape).